A 570-amino-acid chain; its full sequence is Proline--tRNA ligase (570 aa).

The protein belongs to the class-II aminoacyl-tRNA synthetase family. ProS type 1 subfamily. As to quaternary structure, homodimer.

It is found in the cytoplasm. The catalysed reaction is tRNA(Pro) + L-proline + ATP = L-prolyl-tRNA(Pro) + AMP + diphosphate. Catalyzes the attachment of proline to tRNA(Pro) in a two-step reaction: proline is first activated by ATP to form Pro-AMP and then transferred to the acceptor end of tRNA(Pro). As ProRS can inadvertently accommodate and process non-cognate amino acids such as alanine and cysteine, to avoid such errors it has two additional distinct editing activities against alanine. One activity is designated as 'pretransfer' editing and involves the tRNA(Pro)-independent hydrolysis of activated Ala-AMP. The other activity is designated 'posttransfer' editing and involves deacylation of mischarged Ala-tRNA(Pro). The misacylated Cys-tRNA(Pro) is not edited by ProRS. The polypeptide is Proline--tRNA ligase (Neisseria meningitidis serogroup C / serotype 2a (strain ATCC 700532 / DSM 15464 / FAM18)).